The primary structure comprises 891 residues: Transportin-1 (891 aa).

HEAT repeat units lie at residues 14–40, 45–83, 92–125, 131–168, 178–208, 221–248, 260–287, 303–381, 389–420, 432–459, 477–510, 518–551, 559–597, 605–653, 664–695, 703–740, 748–784, 792–825, and 834–866; these read GLRE…QQLQ, FPDF…ATFS, YVKS…IVRV, LFQA…LDVD, NVFM…QYIV, YLQG…VQLI, KNVT…FWSA, PRLI…LSNV, TLMP…GAIA, PQIV…TLSR, FDKI…EEEA, LGII…ADAV, KYLD…QALG, EPVF…GLGA, LRDI…RVCP, QEFL…IKIG, ITVV…WVCP, DHFM…VAAN, and TFIC…KQML. An Importin N-terminal domain is found at 35-103; the sequence is IWQQLQHYSQ…KSELLPCIGA (69 aa). Positions 317–330 are enriched in acidic residues; that stretch reads DDDESLADAEEDES. The interval 317 to 337 is disordered; sequence DDDESLADAEEDESFPDRDQD.

This sequence belongs to the importin beta family. Importin beta-2 subfamily.

Its subcellular location is the cytoplasm. It is found in the nucleus. It localises to the nucleoplasm. In terms of biological role, functions in nuclear protein import as nuclear transport receptor. Serves as receptor for nuclear localization signals (NLS) in cargo substrates. Is thought to mediate docking of the importin/substrate complex to the nuclear pore complex (NPC) through binding to nucleoporin and the complex is subsequently translocated through the pore by an energy requiring, Ran-dependent mechanism. At the nucleoplasmic side of the NPC, Ran binds to the importin, the importin/substrate complex dissociates and importin is re-exported from the nucleus to the cytoplasm where GTP hydrolysis releases Ran. The directionality of nuclear import is thought to be conferred by an asymmetric distribution of the GTP- and GDP-bound forms of Ran between the cytoplasm and nucleus. This is Transportin-1 (TRN1) from Oryza sativa subsp. japonica (Rice).